The sequence spans 855 residues: DNA mismatch repair protein MutS (855 aa).

616–623 (GPNMGGKS) is a binding site for ATP.

The protein belongs to the DNA mismatch repair MutS family.

Functionally, this protein is involved in the repair of mismatches in DNA. It is possible that it carries out the mismatch recognition step. This protein has a weak ATPase activity. The chain is DNA mismatch repair protein MutS from Salmonella newport (strain SL254).